We begin with the raw amino-acid sequence, 274 residues long: Elongation factor Ts (274 aa).

The interval T82–V85 is involved in Mg(2+) ion dislocation from EF-Tu.

The protein belongs to the EF-Ts family.

Its subcellular location is the cytoplasm. Functionally, associates with the EF-Tu.GDP complex and induces the exchange of GDP to GTP. It remains bound to the aminoacyl-tRNA.EF-Tu.GTP complex up to the GTP hydrolysis stage on the ribosome. The sequence is that of Elongation factor Ts from Flavobacterium psychrophilum (strain ATCC 49511 / DSM 21280 / CIP 103535 / JIP02/86).